We begin with the raw amino-acid sequence, 445 residues long: Chromosome partition protein MukF (445 aa).

A leucine-zipper region spans residues 213-241; the sequence is LSETSATLRELQDTLQAAGDELQTQILDI.

Belongs to the MukF family. In terms of assembly, interacts, and probably forms a ternary complex, with MukE and MukB via its C-terminal region. The complex formation is stimulated by calcium or magnesium. It is required for an interaction between MukE and MukB.

The protein localises to the cytoplasm. Its subcellular location is the nucleoid. Functionally, involved in chromosome condensation, segregation and cell cycle progression. May participate in facilitating chromosome segregation by condensation DNA from both sides of a centrally located replisome during cell division. Not required for mini-F plasmid partitioning. Probably acts via its interaction with MukB and MukE. Overexpression results in anucleate cells. It has a calcium binding activity. The sequence is that of Chromosome partition protein MukF from Vibrio cholerae serotype O1 (strain ATCC 39541 / Classical Ogawa 395 / O395).